Reading from the N-terminus, the 235-residue chain is Phosphoribosylaminoimidazole-succinocarboxamide synthase (235 aa).

This sequence belongs to the SAICAR synthetase family.

The catalysed reaction is 5-amino-1-(5-phospho-D-ribosyl)imidazole-4-carboxylate + L-aspartate + ATP = (2S)-2-[5-amino-1-(5-phospho-beta-D-ribosyl)imidazole-4-carboxamido]succinate + ADP + phosphate + 2 H(+). Its pathway is purine metabolism; IMP biosynthesis via de novo pathway; 5-amino-1-(5-phospho-D-ribosyl)imidazole-4-carboxamide from 5-amino-1-(5-phospho-D-ribosyl)imidazole-4-carboxylate: step 1/2. This Streptococcus gordonii (strain Challis / ATCC 35105 / BCRC 15272 / CH1 / DL1 / V288) protein is Phosphoribosylaminoimidazole-succinocarboxamide synthase.